Consider the following 101-residue polypeptide: Citrate lyase acyl carrier protein (101 aa).

Position 14 is an O-(phosphoribosyl dephospho-coenzyme A)serine (Ser-14).

The protein belongs to the CitD family. As to quaternary structure, oligomer with a subunit composition of (alpha,beta,gamma)6.

Its subcellular location is the cytoplasm. Functionally, covalent carrier of the coenzyme of citrate lyase. The chain is Citrate lyase acyl carrier protein from Lacticaseibacillus casei (strain BL23) (Lactobacillus casei).